The primary structure comprises 228 residues: Thermonuclease (228 aa).

The signal sequence occupies residues 1–23; it reads MTEYLLSAGICMAIVSILLIGMA. Positions 24–60 are excised as a propeptide; that stretch reads ISNVSKEQYAKRFFFFATSCLVLTLVVASSLSSSANA. Asp100 is a binding site for Ca(2+). Arg114 is an active-site residue. Ca(2+)-binding residues include Asp119 and Thr120. Active-site residues include Glu122 and Arg166.

It belongs to the thermonuclease family. The cofactor is Ca(2+).

It is found in the secreted. It catalyses the reaction Endonucleolytic cleavage to nucleoside 3'-phosphates and 3'-phosphooligonucleotide end-products.. In terms of biological role, enzyme that catalyzes the hydrolysis of both DNA and RNA at the 5' position of the phosphodiester bond. This chain is Thermonuclease (nuc), found in Staphylococcus aureus (strain MRSA252).